Here is a 121-residue protein sequence, read N- to C-terminus: Chromosome transmission fidelity protein 8 homolog (121 aa).

Belongs to the CTF8 family. As to quaternary structure, component of the CTF18-RFC complex, which consists of CTF18, CTF8, DSCC1, RFC2, RFC3, RFC4 and RFC5. The CTF18-RFC complex does not interact with the Rad9/Rad1/Hus1 complex. The CTF18-RFC complex interacts with POLH. CTF18/CTF8/DSCC1 associate with PCNA. CTF8 exists as a dimer with DSCC1.

It localises to the nucleus. Chromosome cohesion factor involved in sister chromatid cohesion and fidelity of chromosome transmission. Component of one of the cell nuclear antigen loader complexes, CTF18-replication factor C (CTF18-RFC), which consists of CTF18, CTF8, DSCC1, RFC2, RFC3, RFC4 and RFC5. The CTF18-RFC complex binds to single-stranded and primed DNAs and has weak ATPase activity that is stimulated the presence of primed DNA, replication protein A (RPA) and proliferating cell nuclear antigen (PCNA). The CTF18-RFC complex catalyzes the ATP-dependent loading of PCNA onto primed and gapped DNA. It also interacts with and stimulates POLH, which is suggestive of a protein network that coordinates DNA repair, recombination and chromosome cohesion reactions with replication fork progression. This is Chromosome transmission fidelity protein 8 homolog from Homo sapiens (Human).